A 324-amino-acid chain; its full sequence is Chlorophyllase-1 (324 aa).

Positions 136–140 (GHSRG) match the GXSXG motif. Residue S138 is the Nucleophile of the active site. Catalysis depends on charge relay system residues D168 and H243.

Belongs to the AB hydrolase superfamily. Lipase family. In terms of tissue distribution, expressed in seedlings, leaves, flowers and siliques, but not in roots.

The protein resides in the cytoplasm. Its subcellular location is the cytosol. It carries out the reaction a chlorophyll + H2O = a chlorophyllide + phytol + H(+). The enzyme catalyses chlorophyll a + H2O = phytol + chlorophyllide a + H(+). It functions in the pathway porphyrin-containing compound metabolism; chlorophyll degradation. Functionally, catalyzes the hydrolysis of ester bond in chlorophyll to yield chlorophyllide and phytol. Shows a preferential activity toward chlorophyll a. Does not seem to be required for chlorophyll degradation during senescence. May modulate the balance between different plant defense pathways. The protein is Chlorophyllase-1 of Arabidopsis thaliana (Mouse-ear cress).